A 298-amino-acid polypeptide reads, in one-letter code: Bifunctional protein FolD (298 aa).

Residues 166–168 (GRS), Ser-195, and Ile-236 each bind NADP(+).

Belongs to the tetrahydrofolate dehydrogenase/cyclohydrolase family. In terms of assembly, homodimer.

The catalysed reaction is (6R)-5,10-methylene-5,6,7,8-tetrahydrofolate + NADP(+) = (6R)-5,10-methenyltetrahydrofolate + NADPH. It carries out the reaction (6R)-5,10-methenyltetrahydrofolate + H2O = (6R)-10-formyltetrahydrofolate + H(+). Its pathway is one-carbon metabolism; tetrahydrofolate interconversion. Functionally, catalyzes the oxidation of 5,10-methylenetetrahydrofolate to 5,10-methenyltetrahydrofolate and then the hydrolysis of 5,10-methenyltetrahydrofolate to 10-formyltetrahydrofolate. In Chlorobium phaeobacteroides (strain BS1), this protein is Bifunctional protein FolD.